A 60-amino-acid polypeptide reads, in one-letter code: Three-finger toxin Mnn I (60 aa).

Disulfide bonds link C3-C22, C17-C39, C41-C52, and C53-C58.

Belongs to the three-finger toxin family. Short-chain subfamily. Type I alpha-neurotoxin sub-subfamily. As to expression, expressed by the venom gland.

The protein localises to the secreted. Functionally, binds to muscle nicotinic acetylcholine receptor (nAChR) and inhibit acetylcholine from binding to the receptor, thereby impairing neuromuscular transmission. The polypeptide is Three-finger toxin Mnn I (Micrurus nigrocinctus (Central American coral snake)).